The primary structure comprises 1000 residues: Ribosome assembly protein 1 (1000 aa).

The 230-residue stretch at glutamate 17–lysine 246 folds into the tr-type G domain. Residues alanine 26–threonine 33, aspartate 100–histidine 104, and asparagine 154–aspartate 157 each bind GTP.

The protein belongs to the TRAFAC class translation factor GTPase superfamily. Classic translation factor GTPase family.

It is found in the cytoplasm. It catalyses the reaction GTP + H2O = GDP + phosphate + H(+). With respect to regulation, GTPase activity is stimulated in the presence of 60S subunits. GTPase involved in the biogenesis of the 60S ribosomal subunit and translational activation of ribosomes. Together with sdo1, may trigger the GTP-dependent release of tif6 from 60S pre-ribosomes in the cytoplasm, thereby activating ribosomes for translation competence by allowing 80S ribosome assembly and facilitating tif6 recycling to the nucleus, where it is required for 60S rRNA processing and nuclear export. Inhibits GTPase activity of ribosome-bound EF-2. The protein is Ribosome assembly protein 1 (ria1) of Schizosaccharomyces pombe (strain 972 / ATCC 24843) (Fission yeast).